A 244-amino-acid polypeptide reads, in one-letter code: 5-oxoprolinase subunit A (244 aa).

Belongs to the LamB/PxpA family. In terms of assembly, forms a complex composed of PxpA, PxpB and PxpC.

It catalyses the reaction 5-oxo-L-proline + ATP + 2 H2O = L-glutamate + ADP + phosphate + H(+). Catalyzes the cleavage of 5-oxoproline to form L-glutamate coupled to the hydrolysis of ATP to ADP and inorganic phosphate. The protein is 5-oxoprolinase subunit A of Escherichia coli (strain K12).